The sequence spans 240 residues: MRFDVVTLFPDFFTSPLASGLLGKALAKQIAEVYLLNPRDFTTDKHHRVDDESYGGGVGMVLKPEPIFAAVESLPVLPRREVILMSPQGERLDQALLQSLADNFDQLVVICGHYEGVDERVVDHLVTREISLGDFVLTCGEIPALTLLNGVIRLLPGTVGKAESLQNESFIDGLLDFPHYTRPADFRGWPVPQVLRSGHHAEVDRWRRTQQIQRTRDRRPDLYQRWLNSLPPDSLQDFTV.

S-adenosyl-L-methionine contacts are provided by residues G112 and 132–137; that span reads LGDFVL.

This sequence belongs to the RNA methyltransferase TrmD family. As to quaternary structure, homodimer.

Its subcellular location is the cytoplasm. The catalysed reaction is guanosine(37) in tRNA + S-adenosyl-L-methionine = N(1)-methylguanosine(37) in tRNA + S-adenosyl-L-homocysteine + H(+). Functionally, specifically methylates guanosine-37 in various tRNAs. In Cyanothece sp. (strain PCC 7425 / ATCC 29141), this protein is tRNA (guanine-N(1)-)-methyltransferase.